The sequence spans 859 residues: Probable helicase A859L (859 aa).

A Helicase ATP-binding domain is found at 178–349; the sequence is YQELRRSGRA…KNRELFGGVA (172 aa). 191 to 198 provides a ligand contact to ATP; the sequence is MACRCGKT. Residues 298-301 carry the DEAH box motif; sequence DECH. A Helicase C-terminal domain is found at 394–553; the sequence is QIIMALAYLK…RFYEHLLNPS (160 aa).

Belongs to the asfivirus helicase A859L family.

The sequence is that of Probable helicase A859L from Ornithodoros (relapsing fever ticks).